The chain runs to 409 residues: TAR DNA-binding protein 43 (409 aa).

RRM domains follow at residues 105-200 (SDLI…RCTE) and 191-262 (RKVF…TAEP). Disordered regions lie at residues 260-302 (AEPK…NQGG) and 341-409 (SQQN…GWGM). A compositionally biased stretch (basic and acidic residues) spans 261 to 274 (EPKHNNNRQLERGG). Positions 281-292 (FGNQGYPNSRPS) are enriched in polar residues. Low complexity-rich tracts occupy residues 341–387 (SQQN…PNAG) and 395–409 (GFSS…GWGM).

In terms of assembly, homodimer.

The protein localises to the nucleus. It localises to the cytoplasm. The protein resides in the stress granule. It is found in the mitochondrion. In terms of biological role, probably involved in transcriptional repression. May play a role in the maintenance of the circadian clock periodicity. The sequence is that of TAR DNA-binding protein 43 (tardbp) from Xenopus tropicalis (Western clawed frog).